Here is a 260-residue protein sequence, read N- to C-terminus: Triosephosphate isomerase (260 aa).

Position 11-13 (11-13 (NWK)) interacts with substrate. The Electrophile role is filled by His103. Glu175 acts as the Proton acceptor in catalysis. Substrate contacts are provided by residues Gly181, Ser220, and 241–242 (GG).

The protein belongs to the triosephosphate isomerase family. In terms of assembly, homodimer.

It is found in the cytoplasm. It catalyses the reaction D-glyceraldehyde 3-phosphate = dihydroxyacetone phosphate. The protein operates within carbohydrate biosynthesis; gluconeogenesis. It participates in carbohydrate degradation; glycolysis; D-glyceraldehyde 3-phosphate from glycerone phosphate: step 1/1. Involved in the gluconeogenesis. Catalyzes stereospecifically the conversion of dihydroxyacetone phosphate (DHAP) to D-glyceraldehyde-3-phosphate (G3P). This Shewanella sp. (strain W3-18-1) protein is Triosephosphate isomerase.